A 113-amino-acid polypeptide reads, in one-letter code: Hydrogenase maturation factor HypA (113 aa).

Residue histidine 2 coordinates Ni(2+). Zn(2+)-binding residues include cysteine 73, cysteine 76, cysteine 89, and cysteine 92.

This sequence belongs to the HypA/HybF family.

Its function is as follows. Involved in the maturation of [NiFe] hydrogenases. Required for nickel insertion into the metal center of the hydrogenase. This chain is Hydrogenase maturation factor HypA, found in Chlorobaculum tepidum (strain ATCC 49652 / DSM 12025 / NBRC 103806 / TLS) (Chlorobium tepidum).